A 378-amino-acid polypeptide reads, in one-letter code: MQSTIKPVEYDRPVAAGTVCGVGQAWAKVPDAPSAEERAALKARIKALLAREKAVLVAHYYVDAELQELADETGGCVADSLEMARFGRDHDAQTLVVAGVRFMGETAKILSPNKRILMPDLDATCSLDLGCPVGEFSAFCDAHPDRTVVVYANTSAAVKARADWMVTSSIGLEIVADLHARGEKIIWAPDRHLGSYIQKKTGADMLLWQGSCLVHDEFKGIELDLLRAEYPDAKVLVHPESPENVVAQADVVGSTTQLIDAAVKFDAKRFIVATDLGILHKMQLAAPGKTFIAAPTAGNSATCKSCAHCPWMAMNGLANLADVLERGHNEIFVDPAIGERARLPIDRMLEFAAAHKKRVQASGDLQRDQSLFANVGAA.

Iminosuccinate-binding residues include histidine 59 and serine 80. Cysteine 125 provides a ligand contact to [4Fe-4S] cluster. Residues tyrosine 151–asparagine 153 and serine 168 each bind iminosuccinate. Cysteine 212 is a binding site for [4Fe-4S] cluster. Iminosuccinate-binding positions include histidine 238–glutamate 240 and threonine 255. A [4Fe-4S] cluster-binding site is contributed by cysteine 309.

The protein belongs to the quinolinate synthase family. Type 1 subfamily. [4Fe-4S] cluster serves as cofactor.

The protein localises to the cytoplasm. It catalyses the reaction iminosuccinate + dihydroxyacetone phosphate = quinolinate + phosphate + 2 H2O + H(+). Its pathway is cofactor biosynthesis; NAD(+) biosynthesis; quinolinate from iminoaspartate: step 1/1. Its function is as follows. Catalyzes the condensation of iminoaspartate with dihydroxyacetone phosphate to form quinolinate. The sequence is that of Quinolinate synthase from Burkholderia orbicola (strain MC0-3).